A 101-amino-acid polypeptide reads, in one-letter code: Urease subunit beta (101 aa).

This sequence belongs to the urease beta subunit family. As to quaternary structure, heterotrimer of UreA (gamma), UreB (beta) and UreC (alpha) subunits. Three heterotrimers associate to form the active enzyme.

Its subcellular location is the cytoplasm. The catalysed reaction is urea + 2 H2O + H(+) = hydrogencarbonate + 2 NH4(+). Its pathway is nitrogen metabolism; urea degradation; CO(2) and NH(3) from urea (urease route): step 1/1. This chain is Urease subunit beta, found in Cupriavidus necator (strain ATCC 17699 / DSM 428 / KCTC 22496 / NCIMB 10442 / H16 / Stanier 337) (Ralstonia eutropha).